The chain runs to 199 residues: Transmembrane protein 223 (199 aa).

Residues 1 to 43 are Mitochondrial matrix-facing; sequence MVASVPLRNVSHLLSVLRSQNVPRYLQNGVPRDVLLFRHERGR. A helical membrane pass occupies residues 44–64; that stretch reads FFAILGLFCAGQGIFWTSLAV. At 65 to 94 the chain is on the mitochondrial intermembrane side; it reads AALSRPLSRVPAEAPNRSYQDLRSALWRYG. Residues 95-115 form a helical membrane-spanning segment; the sequence is LAVGCGTMGVLVLGAGLLYSL. Residues 116–199 lie on the Mitochondrial matrix side of the membrane; sequence RSVRSVMLLA…DNTVGAYRSL (84 aa).

It belongs to the TMEM223 family. As to quaternary structure, associates with the mitochondrial ribosome.

It is found in the mitochondrion inner membrane. Functionally, mitochondrial ribosome-associated protein involved in the first steps of cytochrome c oxidase complex (complex IV) biogenesis. Stimulates the translation of MT-CO1 mRNA and is a constituent of early MT-CO1 assembly intermediates. In Mus musculus (Mouse), this protein is Transmembrane protein 223.